A 296-amino-acid polypeptide reads, in one-letter code: Thiamine-monophosphate kinase (296 aa).

Mg(2+)-binding residues include Asp32, Thr46, and Asp48. A substrate-binding site is contributed by Asp55. Residues Asp76 and Asp121 each coordinate Mg(2+). ATP contacts are provided by residues 120–121 (GD) and Arg144. Position 206 (Asp206) interacts with Mg(2+). Ser208 is a binding site for ATP. Residue Asp209 participates in Mg(2+) binding. Residue Tyr293 coordinates substrate.

The protein belongs to the thiamine-monophosphate kinase family.

The catalysed reaction is thiamine phosphate + ATP = thiamine diphosphate + ADP. Its pathway is cofactor biosynthesis; thiamine diphosphate biosynthesis; thiamine diphosphate from thiamine phosphate: step 1/1. Catalyzes the ATP-dependent phosphorylation of thiamine-monophosphate (TMP) to form thiamine-pyrophosphate (TPP), the active form of vitamin B1. The polypeptide is Thiamine-monophosphate kinase (Archaeoglobus fulgidus (strain ATCC 49558 / DSM 4304 / JCM 9628 / NBRC 100126 / VC-16)).